Here is a 385-residue protein sequence, read N- to C-terminus: MVLLYILIMVALIPMYMTVVQDATFSHPPPGLLIPEAWSGSGSIRLWTDAQEIPVRCFWKLVYDPRIHPETAAIQQGDSIMYMYSGTRFLDYRTVLSALLLTFVFFWRMLSMFDRSRNRFQRACVSIPSALLEVCRQKAIKKTATLPFYGQALYFGIMCLYTAHIVLWDFLNSFAGTLWLITLNLANGTAQIINLRKERHRNRHDEESSWTFGQIVPIVLLVSPLVAAFEDLLSKRSRRALREGSVGNTSLNEVDLTPEPSLTEATTLSLHTRPLIYSVPTSITQSSIASQKSSGTPAQDLIRSSWPYAILFWELHVLLAFMVIWLPLAQSQLFIFRYAYWEAYYAFPAAVGTFWLTVVIAVPFSSIGRSSYPCPKPRRSGLNVA.

An N-terminal signal peptide occupies residues 1–22; sequence MVLLYILIMVALIPMYMTVVQD. 2 helical membrane passes run 94 to 114 and 148 to 168; these read TVLSALLLTFVFFWRMLSMFD and FYGQALYFGIMCLYTAHIVLW. N187 carries N-linked (GlcNAc...) asparagine glycosylation. Residues 209–229 form a helical membrane-spanning segment; sequence SWTFGQIVPIVLLVSPLVAAF. N-linked (GlcNAc...) asparagine glycosylation occurs at N248. 2 consecutive transmembrane segments (helical) span residues 309–329 and 344–364; these read AILFWELHVLLAFMVIWLPLA and YYAFPAAVGTFWLTVVIAVPF.

It localises to the membrane. Functionally, part of the gene cluster that mediates the biosynthesis of elsinochromes, pigments consisting of at least four interconvertible tautomers (A, B, C and D) that have a core phenolic quinone to which various side chains are attached and which play an important role in fungal pathogenesis. The non-reducing polyketide synthase PKS1 was proposed to iteratively catalyze decarboxylation between acetyl-CoA and malonyl-CoA subunits for polyketide chain elongation. The released polyketide undergoes cyclization to form an aromatic ring, and proceeds via serial modification steps to produce the heptaketide back- bone of elsinochrome. As elsinochrome has a symmetrical structure, two identical heptaketides are fused to form a core 1,2-dihydrobenzo-perylene ring structure, which can then be successively modified to produce the various derivatives of elsinochrome. Some of these reactions may be cooperatively carried out, at least in part, by the products of RDT1, OXR1 and PKS1. PRF1, embedded within the elsinochrome cluster possibly functions to stabilize some of the biosynthetic enzymes required for elsinochrome production. As prefoldin is a hexamer containing 2 a and 4 b subunits, additional prefoldin subunits, whose coding genes may not immediately link to the elsinochrome biosynthetic gene cluster, are required to fulfill the chaperone function. In addition, no methyltransferase-coding gene exists within the biosynthetic gene cluster, even though elsinochrome has four methyl groups at positions C3, C7, C8 and C12. Apparently, the identified gene cluster does not contain the entire entourage of genes responsible for elsinochrome biosynthesis. Once elsinochrome is synthesized, it must be exported outside the fungal cells, which is probably accomplished by the ECT1 transporter, to avoid toxicity. The chain is Elsinochromes biosynthesis cluster protein HP2 from Elsinoe fawcettii (Citrus scab fungus).